Here is a 144-residue protein sequence, read N- to C-terminus: 3-hydroxyacyl-[acyl-carrier-protein] dehydratase FabZ (144 aa).

Residue His-52 is part of the active site.

This sequence belongs to the thioester dehydratase family. FabZ subfamily.

It is found in the cytoplasm. It carries out the reaction a (3R)-hydroxyacyl-[ACP] = a (2E)-enoyl-[ACP] + H2O. In terms of biological role, involved in unsaturated fatty acids biosynthesis. Catalyzes the dehydration of short chain beta-hydroxyacyl-ACPs and long chain saturated and unsaturated beta-hydroxyacyl-ACPs. The polypeptide is 3-hydroxyacyl-[acyl-carrier-protein] dehydratase FabZ (Syntrophomonas wolfei subsp. wolfei (strain DSM 2245B / Goettingen)).